A 256-amino-acid polypeptide reads, in one-letter code: Pro-thyrotropin-releasing hormone (256 aa).

Positions 1–24 (MQGPWLMMALALIFVLTGIPKSCA) are cleaved as a signal peptide. Disordered stretches follow at residues 76–128 (RQHP…EGDS) and 151–215 (VKRQ…HPCG). A proline amide mark is found at Pro-79, Pro-111, Pro-156, and Pro-174. The span at 104 to 113 (RPHKRQHPGR) shows a compositional bias: basic residues. The segment covering 177–188 (RFIDPELQRSWE) has biased composition (basic and acidic residues). The residue at position 205 (Pro-205) is a Proline amide.

This sequence belongs to the TRH family. As to expression, specifically expressed in hypothalamus and testis.

It localises to the secreted. Functions as a regulator of the biosynthesis of TSH in the anterior pituitary gland and as a neurotransmitter/ neuromodulator in the central and peripheral nervous systems. In Mus musculus (Mouse), this protein is Pro-thyrotropin-releasing hormone (Trh).